The following is a 290-amino-acid chain: HTH-type transcriptional regulator BsdA (290 aa).

The region spanning 1–59 is the HTH lysR-type domain; it reads MDIRQLRYFITIAQEQKITSAAKKLHMAQPPLSRQLKQLEDELGVVLFDRNKKKQMTLT. Positions 18 to 37 form a DNA-binding region, H-T-H motif; sequence ITSAAKKLHMAQPPLSRQLK.

The protein belongs to the LysR transcriptional regulatory family.

Functionally, could be a positive regulator of bsdBCD expression in response to salicylic acid. The sequence is that of HTH-type transcriptional regulator BsdA (bsdA) from Bacillus subtilis (strain 168).